The primary structure comprises 629 residues: MFASRFDPSQLTAPAASAPEGIVGTTPPAIVPLKRQATESDNEEYGSHQDSDESSNSSSEEDEDRMQVDYGASEEDSSEVEEEESKPSTHSTVLSRFKQTVSLQERLGASDIAESKEDESIEDEAASTHQLKQIPQPEFVKNPMNLNTNSLQFKSTGWLNTEKIYYDNSLIKPFSDYANELEAKLLQNICKNFSTNTFPIQSIILDSILPVLNFTLNVSKRNFTRRIGDILVNAATGSGKTLAYSIPIVQTLFKRQINRLRCIIIVPTKLLINQVYTTLTKLTQGTSLIVSIAKLENSLKDEHKKLSNLEPDILITTPGRLVDHLNMKSINLKNLKFLIIDEADRLLNQSFQGWCPKLMSHLKTDKLDTLPGNVIKMIFSATLTTNTEKLNGLNLYKPKLFLKQTDKLYQLPNKLNEFNINIPTAKSIYKPLILLYSICQFMAHSPIAAKILIFVKSNESSIRLSKLLQLICESRSQSSVLKNLQNLAVSINSVNSNNSKAENKKIVANFSHPSESAGITILITTDIMSRGIDINDITQVINYDPPMSSQQYVHRVGRTARANELGSAYNLLVGRGERTFFDDLNKDLDRDGKSVQPLELDFTLLESDSELYTSSLESLKNYHNNTAQA.

Residues 1 to 130 (MFASRFDPSQ…IEDEAASTHQ (130 aa)) are disordered. The span at 72 to 84 (ASEEDSSEVEEEE) shows a compositional bias: acidic residues. 3 positions are modified to phosphoserine: S73, S77, and S78. A compositionally biased stretch (polar residues) spans 88–103 (STHSTVLSRFKQTVSL). Positions 116–125 (KEDESIEDEA) are enriched in acidic residues. The Q motif signature appears at 197–205 (TFPIQSIIL). One can recognise a Helicase ATP-binding domain in the interval 221 to 401 (RNFTRRIGDI…GLNLYKPKLF (181 aa)). 234 to 241 (AATGSGKT) serves as a coordination point for ATP. The DEAD box motif lies at 341 to 344 (DEAD). The region spanning 437 to 603 (SICQFMAHSP…SVQPLELDFT (167 aa)) is the Helicase C-terminal domain.

This sequence belongs to the DEAD box helicase family. DDX51/DBP6 subfamily. As to quaternary structure, associated with pre-ribosomal particles. Interacts with DBP9 and RSA3. Together with NOP8, URB1, URB2 and RSA3, forms an RNA-independent complex, which is required during early maturation of nascent 60S ribosomal subunits.

It is found in the nucleus. Its subcellular location is the nucleolus. The catalysed reaction is ATP + H2O = ADP + phosphate + H(+). ATP-binding RNA helicase involved in the biogenesis of 60S ribosomal subunits and is required for the normal formation of 25S and 5.8S rRNAs. In Saccharomyces cerevisiae (strain YJM789) (Baker's yeast), this protein is ATP-dependent RNA helicase DBP6 (DBP6).